A 179-amino-acid chain; its full sequence is Large ribosomal subunit protein uL5 (179 aa).

Belongs to the universal ribosomal protein uL5 family. In terms of assembly, part of the 50S ribosomal subunit; part of the 5S rRNA/L5/L18/L25 subcomplex. Contacts the 5S rRNA and the P site tRNA. Forms a bridge to the 30S subunit in the 70S ribosome.

In terms of biological role, this is one of the proteins that bind and probably mediate the attachment of the 5S RNA into the large ribosomal subunit, where it forms part of the central protuberance. In the 70S ribosome it contacts protein S13 of the 30S subunit (bridge B1b), connecting the 2 subunits; this bridge is implicated in subunit movement. Contacts the P site tRNA; the 5S rRNA and some of its associated proteins might help stabilize positioning of ribosome-bound tRNAs. The polypeptide is Large ribosomal subunit protein uL5 (Yersinia pestis).